The following is a 152-amino-acid chain: MSQPCPCGSADEYSLCCGRIVSGERVAPDPSHLMRSRYCAFVMKDADYLIKSWHPTCNAAAFRDDIIAGFANTRWLGLTIFEHTWSEAENTGYVSFIARFSEQGKNGAIIERSRFIKENGQWYYIDGTRPQLGRNDPCPCGSGKKFKKCCGQ.

This sequence belongs to the UPF0225 family.

The protein is UPF0225 protein YchJ (ychJ) of Salmonella typhimurium (strain LT2 / SGSC1412 / ATCC 700720).